We begin with the raw amino-acid sequence, 529 residues long: GTPase Obg (529 aa).

Residues 2–159 (ASFVDRVVLH…SDIVLELKSI (158 aa)) form the Obg domain. The 184-residue stretch at 160–343 (ADIALVGFPS…LGFAMAEIVK (184 aa)) folds into the OBG-type G domain. Residues 166–173 (GFPSAGKS), 191–195 (FTTLI), 212–215 (DVPG), 295–298 (NKVD), and 324–326 (SAT) contribute to the GTP site. Positions 173 and 193 each coordinate Mg(2+). Residues 363–447 (PRAVNETGFR…DDGVVFDWEP (85 aa)) form the OCT domain. The segment at 461–529 (GTDIRFADTG…ESGLDSGDES (69 aa)) is disordered. The segment covering 462-502 (TDIRFADTGDRPTRSQKREEQQERRDAKAAARAELEAERKA) has biased composition (basic and acidic residues).

It belongs to the TRAFAC class OBG-HflX-like GTPase superfamily. OBG GTPase family. Monomer. The cofactor is Mg(2+).

Its subcellular location is the cytoplasm. An essential GTPase which binds GTP, GDP and possibly (p)ppGpp with moderate affinity, with high nucleotide exchange rates and a fairly low GTP hydrolysis rate. Plays a role in control of the cell cycle, stress response, ribosome biogenesis and in those bacteria that undergo differentiation, in morphogenesis control. This Pseudarthrobacter chlorophenolicus (strain ATCC 700700 / DSM 12829 / CIP 107037 / JCM 12360 / KCTC 9906 / NCIMB 13794 / A6) (Arthrobacter chlorophenolicus) protein is GTPase Obg.